We begin with the raw amino-acid sequence, 448 residues long: Exodeoxyribonuclease 7 large subunit (448 aa).

This sequence belongs to the XseA family. As to quaternary structure, heterooligomer composed of large and small subunits.

Its subcellular location is the cytoplasm. It carries out the reaction Exonucleolytic cleavage in either 5'- to 3'- or 3'- to 5'-direction to yield nucleoside 5'-phosphates.. Bidirectionally degrades single-stranded DNA into large acid-insoluble oligonucleotides, which are then degraded further into small acid-soluble oligonucleotides. The sequence is that of Exodeoxyribonuclease 7 large subunit from Shewanella sp. (strain MR-7).